We begin with the raw amino-acid sequence, 298 residues long: Diphthine methyl ester synthase (298 aa).

S-adenosyl-L-methionine is bound by residues Leu-9, Asp-85, Gly-88, 113–114 (SV), Leu-164, Leu-222, and His-247.

The protein belongs to the diphthine synthase family.

It is found in the cytoplasm. The catalysed reaction is 2-[(3S)-amino-3-carboxypropyl]-L-histidyl-[translation elongation factor 2] + 4 S-adenosyl-L-methionine = diphthine methyl ester-[translation elongation factor 2] + 4 S-adenosyl-L-homocysteine + 3 H(+). It functions in the pathway protein modification; peptidyl-diphthamide biosynthesis. S-adenosyl-L-methionine-dependent methyltransferase that catalyzes four methylations of the modified target histidine residue in translation elongation factor 2 (EF-2), to form an intermediate called diphthine methyl ester. The four successive methylation reactions represent the second step of diphthamide biosynthesis. The sequence is that of Diphthine methyl ester synthase (DPH5) from Kluyveromyces lactis (strain ATCC 8585 / CBS 2359 / DSM 70799 / NBRC 1267 / NRRL Y-1140 / WM37) (Yeast).